Here is a 471-residue protein sequence, read N- to C-terminus: Tyrosine--tRNA ligase (471 aa).

Tyr41 contributes to the L-tyrosine binding site. The short motif at 46–55 (PTAPSLHVGN) is the 'HIGH' region element. L-tyrosine-binding residues include Tyr176 and Gln180. A 'KMSKS' region motif is present at residues 236 to 240 (KFGKT). Lys239 lines the ATP pocket. Residues 403–471 (DLITHILQKV…GKKHLAAVFY (69 aa)) form the S4 RNA-binding domain.

It belongs to the class-I aminoacyl-tRNA synthetase family. TyrS type 1 subfamily. Homodimer.

It is found in the cytoplasm. It carries out the reaction tRNA(Tyr) + L-tyrosine + ATP = L-tyrosyl-tRNA(Tyr) + AMP + diphosphate + H(+). In terms of biological role, catalyzes the attachment of tyrosine to tRNA(Tyr) in a two-step reaction: tyrosine is first activated by ATP to form Tyr-AMP and then transferred to the acceptor end of tRNA(Tyr). The chain is Tyrosine--tRNA ligase from Tropheryma whipplei (strain Twist) (Whipple's bacillus).